Reading from the N-terminus, the 491-residue chain is NADH-quinone oxidoreductase subunit N (491 aa).

Transmembrane regions (helical) follow at residues 6–26 (TLAPVAPIIFLAIAIAAINWI), 37–57 (VAYPLSLLTTLVLTAWFGMNA), 69–89 (LVVIDPMANVLSAFCAAGLFV), 103–123 (MFAGEFYMLALFTLGGQIVMI), 128–148 (FLTLYLGLELLSLSSYALVAL), 163–183 (FVLGALASGFLLYGISMMYGA), 206–226 (LAFGVVFIVAGLSFKLGAAPF), 238–258 (PTAVTLLIAGGPKVAAFALFI), 273–293 (QMMLVVLSIISLAIGNLTAIV), 301–321 (LAYSTISHMGFVLLGLLSGVV), 335–355 (AMFYSVTYLLTTLGTFGIILL), 379–399 (FAFLMLVMMFSLAGIPPTVGF), 413–433 (GMTWLAVVAVLFSLIGAFYYL), and 458–478 (SMLSVNGAAVILLGLFPAALM).

Belongs to the complex I subunit 2 family. NDH-1 is composed of 14 different subunits. Subunits NuoA, H, J, K, L, M, N constitute the membrane sector of the complex.

It localises to the cell inner membrane. The enzyme catalyses a quinone + NADH + 5 H(+)(in) = a quinol + NAD(+) + 4 H(+)(out). In terms of biological role, NDH-1 shuttles electrons from NADH, via FMN and iron-sulfur (Fe-S) centers, to quinones in the respiratory chain. The immediate electron acceptor for the enzyme in this species is believed to be ubiquinone. Couples the redox reaction to proton translocation (for every two electrons transferred, four hydrogen ions are translocated across the cytoplasmic membrane), and thus conserves the redox energy in a proton gradient. The protein is NADH-quinone oxidoreductase subunit N of Cupriavidus taiwanensis (strain DSM 17343 / BCRC 17206 / CCUG 44338 / CIP 107171 / LMG 19424 / R1) (Ralstonia taiwanensis (strain LMG 19424)).